The primary structure comprises 130 residues: Chaperone protein SycT (130 aa).

As to quaternary structure, binds to YopT.

Functions as a specific chaperone for YopT. The chain is Chaperone protein SycT (sycT) from Yersinia enterocolitica serotype O:8 / biotype 1B (strain NCTC 13174 / 8081).